A 280-amino-acid polypeptide reads, in one-letter code: Putative sugar uptake protein (280 aa).

Transmembrane regions (helical) follow at residues 4-21 (LIAL…LIAG), 33-52 (MGLG…IHPA), 56-78 (ITIF…GQFI), 91-113 (LSTG…EWTS), 117-136 (YLIG…LTAI), 149-166 (IILL…SSFP), 176-195 (LFLP…LLVS), 207-229 (WLNI…SAQL), 233-255 (ITAF…FFIG), and 262-279 (ELIA…GAAI).

The protein belongs to the GRP transporter (TC 2.A.7.5) family.

Its subcellular location is the cell membrane. This Lactobacillus helveticus (Lactobacillus suntoryeus) protein is Putative sugar uptake protein.